Consider the following 500-residue polypeptide: Adenylosuccinate synthetase, chloroplastic (500 aa).

GTP contacts are provided by residues glycine 87 to lysine 93 and glycine 115 to threonine 117. The active-site Proton acceptor is the aspartate 88. Residues aspartate 88 and glycine 115 each contribute to the Mg(2+) site. Residues aspartate 88 to lysine 91, asparagine 113 to histidine 116, threonine 205, arginine 219, glutamine 299, threonine 314, and arginine 378 each bind IMP. The active-site Proton donor is histidine 116. Substrate is bound at residue threonine 374–arginine 380. Residues arginine 380, lysine 406 to aspartate 408, and glycine 489 to glycine 491 each bind GTP.

Belongs to the adenylosuccinate synthetase family. As to quaternary structure, homodimer. Mg(2+) serves as cofactor.

Its subcellular location is the plastid. It localises to the chloroplast. It catalyses the reaction IMP + L-aspartate + GTP = N(6)-(1,2-dicarboxyethyl)-AMP + GDP + phosphate + 2 H(+). It functions in the pathway purine metabolism; AMP biosynthesis via de novo pathway; AMP from IMP: step 1/2. Plays an important role in the de novo pathway and in the salvage pathway of purine nucleotide biosynthesis. Catalyzes the first committed step in the biosynthesis of AMP from IMP. The chain is Adenylosuccinate synthetase, chloroplastic from Solanum bulbocastanum (Wild potato).